The chain runs to 1419 residues: Agglutinin-like protein 5 (1419 aa).

The first 17 residues, 1–17 (MIQQFTLLFLYLSFATA), serve as a signal peptide directing secretion. Disulfide bonds link Cys-73–Cys-150, Cys-96–Cys-112, Cys-205–Cys-298, and Cys-227–Cys-256. ALS repeat units lie at residues 365-396 (TTIT…VDVP), 401-432 (TTVT…VQVP), 438-469 (TTTT…VREP), 474-505 (VTTT…VREP), 510-541 (VTTT…VREP), 546-577 (VTTT…VKEP), 582-613 (VTTT…VREP), and 618-649 (VTTT…IHDP). Disordered stretches follow at residues 652 to 752 (ESSS…SSSS) and 864 to 885 (ASSF…SSDQ). N-linked (GlcNAc...) asparagine glycosylation is present at Asn-665. A glycan (N-linked (GlcNAc...) asparagine) is linked at Asn-919. Disordered stretches follow at residues 926–966 (SESE…DSST), 981–1035 (TGMP…TKSS), 1051–1093 (TSTL…KESS), 1134–1177 (EDNE…TTDV), and 1211–1252 (ATSL…NRLS). Composition is skewed to low complexity over residues 928–942 (SESS…ASES), 951–966 (SEST…DSST), and 993–1011 (TSDV…PTSA). A compositionally biased stretch (polar residues) spans 1012 to 1022 (EQSITDNPNID). Composition is skewed to low complexity over residues 1023–1035 (SSQT…TKSS) and 1051–1078 (TSTL…GNIN). 2 stretches are compositionally biased toward polar residues: residues 1079-1093 (AGSS…KESS) and 1138-1160 (PNTF…SVLS). The span at 1212 to 1230 (TSLRSTSSSSNHATESSGT) shows a compositional bias: low complexity. N-linked (GlcNAc...) asparagine glycans are attached at residues Asn-1301 and Asn-1326. Ser-1398 carries the GPI-anchor amidated serine lipid modification. Residues 1399-1419 (SATKHPSWLLKFISVALFFFL) constitute a propeptide, removed in mature form.

It belongs to the ALS family. As to quaternary structure, forms homodimers through the tandem repeats. Aggregates in amyloid-like structures, with self-propagating secondary-structure changes, amyloid-characteristic dye binding, and induced birefringence. Post-translationally, N-glycosylated and O-glycosylated. The GPI-anchor is attached to the protein in the endoplasmic reticulum and serves to target the protein to the cell surface. There, the glucosamine-inositol phospholipid moiety is cleaved off and the GPI-modified mannoprotein is covalently attached via its lipidless GPI glycan remnant to the 1,6-beta-glucan of the outer cell wall layer.

The protein localises to the cell membrane. The protein resides in the secreted. It localises to the cell wall. Functionally, cell surface adhesion protein which mediates both yeast-to-host tissue adherence and yeast aggregation. Plays an important role in the pathogenesis of C.albicans infections. Forms amyloid structures, essential for cell-cell association and cell-substrate adhesion to polystyrene. The chain is Agglutinin-like protein 5 (ALS5) from Candida albicans (Yeast).